Consider the following 248-residue polypeptide: uncharacterized protein (248 aa).

Residues 1-23 (MLKKIVIGVTATAAFGIGAGALA) form the signal peptide.

Its subcellular location is the cell outer membrane. This is an uncharacterized protein from Coxiella burnetii (strain RSA 493 / Nine Mile phase I).